The sequence spans 346 residues: Pyrophosphate--fructose 6-phosphate 1-phosphotransferase (346 aa).

G13 lines the diphosphate pocket. Residue E105 coordinates Mg(2+). Substrate contacts are provided by residues 127–129, R164, 171–173, E224, R269, and 275–278; these read TID, MGR, and HLQR. D129 acts as the Proton acceptor in catalysis.

Belongs to the phosphofructokinase type A (PFKA) family. Mixed-substrate PFK group III subfamily. As to quaternary structure, homodimer. The cofactor is Mg(2+).

It is found in the cytoplasm. The enzyme catalyses beta-D-fructose 6-phosphate + diphosphate = beta-D-fructose 1,6-bisphosphate + phosphate + H(+). It functions in the pathway carbohydrate degradation; glycolysis; D-glyceraldehyde 3-phosphate and glycerone phosphate from D-glucose: step 3/4. Non-allosteric. Its function is as follows. Catalyzes the phosphorylation of D-fructose 6-phosphate, the first committing step of glycolysis. Uses inorganic phosphate (PPi) as phosphoryl donor instead of ATP like common ATP-dependent phosphofructokinases (ATP-PFKs), which renders the reaction reversible, and can thus function both in glycolysis and gluconeogenesis. Consistently, PPi-PFK can replace the enzymes of both the forward (ATP-PFK) and reverse (fructose-bisphosphatase (FBPase)) reactions. The protein is Pyrophosphate--fructose 6-phosphate 1-phosphotransferase of Dictyoglomus thermophilum.